A 723-amino-acid polypeptide reads, in one-letter code: ESX-1 secretion-associated protein EspK (723 aa).

2 disordered regions span residues 175–360 (DLLQ…TPAA) and 393–451 (SGAG…GTPV). A compositionally biased stretch (low complexity) spans 200 to 209 (TPGTPITPGT). Pro residues predominate over residues 210-229 (PITPIPGAPVTPITPTPGTP). Residues 230-249 (VTPVTPGKPVTPVTPVKPGT) show a composition bias toward low complexity. Composition is skewed to pro residues over residues 250-265 (PGEP…PVAP) and 274-308 (PVTP…PSGP). Composition is skewed to low complexity over residues 309–319 (ATPGTPGGEPA), 393–404 (SGAGSHAATGRA), and 412–426 (AAAP…RTAP). Residues 432–444 (STDHIDKPDRSES) are compositionally biased toward basic and acidic residues.

It is found in the cytoplasm. May act as a chaperone that facilitates EspB secretion through an interaction with EccCb1. This is ESX-1 secretion-associated protein EspK from Mycobacterium tuberculosis (strain CDC 1551 / Oshkosh).